A 474-amino-acid chain; its full sequence is Dihydrolipoyl dehydrogenase (474 aa).

FAD-binding positions include 39 to 47, K56, and A118; that span reads EKDAYGGTC. C47 and C52 are oxidised to a cystine. NAD(+)-binding positions include 186–190, E209, and 275–278; these read GGGYI and AVGR. Residues D318 and A326 each contribute to the FAD site. The active-site Proton acceptor is H450.

It belongs to the class-I pyridine nucleotide-disulfide oxidoreductase family. In terms of assembly, homodimer. FAD serves as cofactor.

It localises to the cytoplasm. The catalysed reaction is N(6)-[(R)-dihydrolipoyl]-L-lysyl-[protein] + NAD(+) = N(6)-[(R)-lipoyl]-L-lysyl-[protein] + NADH + H(+). This is Dihydrolipoyl dehydrogenase (lpdA) from Halobacterium salinarum (strain ATCC 700922 / JCM 11081 / NRC-1) (Halobacterium halobium).